Here is a 411-residue protein sequence, read N- to C-terminus: Multidrug resistance protein MdtG (411 aa).

11 consecutive transmembrane segments (helical) span residues 17-37 (LFVAWCGCFLTGIAFSLVMPF), 59-79 (LVFSITFLFSAIASPFWGGLA), 92-112 (ALGMSVVMVLMGLATSIWQFL), 116-136 (AVLGLLGGFVPNANALIATQV), 147-167 (WLSTGAVSGALIGPLIGGLLA), 174-194 (PVFFITASVLFVCFIMTLFAV), 222-242 (VLTLFVTTMIIQVATGSIAPI), 257-277 (LAFVSGLIASVPGVAALISAP), 291-311 (ILVAMLLVSVLLLIPMSMVQN), 320-340 (FLLGAADGALLPAVQTLLIYN), and 379-399 (AVFVVTACVVLFNAIYSWITL).

The protein belongs to the major facilitator superfamily. DHA1 family. MdtG (TC 2.A.1.2.20) subfamily.

The protein resides in the cell inner membrane. This is Multidrug resistance protein MdtG from Erwinia billingiae (strain Eb661).